Here is an 860-residue protein sequence, read N- to C-terminus: MGEVTAEEVEKFLDSNIGFAKQYYNLHYRAKLISDLLGAKEAAVDFSNYHSPSSMEESEIIFDLLRDFQENLQTEKCIFNVMKKLCFLLQADRMSLFMYRTRNGIAELATRLFNVHKDAVLEDCLVMPDQEIVFPLDMGIVGHVAHSKKIANVPNTEEDEHFCDFVDILTEYKTKNILASPIMNGKDVVAIIMAVNKVDGSHFTKRDEEILLKYLNFANLIMKVYHLSYLHNCETRRGQILLWSGSKVFEELTDIERQFHKALYTVRAFLNCDRYSVGLLDMTKQKEFFDVWPVLMGEVPPYSGPRTPDGREINFYKVIDYILHGKEDIKVIPNPPPDHWALVSGLPAYVAQNGLICNIMNAPAEDFFAFQKEPLDESGWMIKNVLSMPIVNKKEEIVGVATFYNRKDGKPFDEMDETLMESLTQFLGWSVLNPDTYESMNKLENRKDIFQDIVKYHVKCDNEEIQKILKTREVYGKEPWECEEEELAEILQAELPDADKYEINKFHFSDLPLTELELVKCGIQMYYELKVVDKFHIPQEALVRFMYSLSKGYRKITYHNWRHGFNVGQTMFSLLVTGKLKRYFTDLEALAMVTAAFCHDIDHRGTNNLYQMKSQNPLAKLHGSSILERHHLEFGKTLLRDESLNIFQNLNRRQHEHAIHMMDIAIIATDLALYFKKRTMFQKIVDQSKTYESEQEWTQYMMLEQTRKEIVMAMMMTACDLSAITKPWEVQSQVALLVAAEFWEQGDLERTVLQQNPIPMMDRNKADELPKLQVGFIDFVCTFVYKEFSRFHEEITPMLDGITNNRKEWKALADEYDAKMKVQEEKKQKQQSAKSAAAGNQPGGNPSPGGATTSKSCCIQ.

At Gly2 the chain carries N-acetylglycine. 2 GAF domains span residues 73–222 (QTEK…NLIM) and 254–431 (DIER…GWSV). Residues 483 to 816 (EEEELAEILQ…KEWKALADEY (334 aa)) enclose the PDEase domain. The active-site Proton donor is the His559. His563, His599, Asp600, and Asp720 together coordinate a divalent metal cation. Positions 821 to 860 (KVQEEKKQKQQSAKSAAAGNQPGGNPSPGGATTSKSCCIQ) are disordered. A compositionally biased stretch (low complexity) spans 830–851 (QQSAKSAAAGNQPGGNPSPGGA). The residue at position 857 (Cys857) is a Cysteine methyl ester. Residue Cys857 is the site of S-farnesyl cysteine attachment. A propeptide spans 858–860 (CIQ) (removed in mature form).

Belongs to the cyclic nucleotide phosphodiesterase family. In terms of assembly, oligomer composed of two catalytic chains (alpha and beta), an inhibitory chain (gamma) and the delta chain. It depends on a divalent metal cation as a cofactor.

The protein resides in the cell membrane. It is found in the cell projection. It localises to the cilium. The protein localises to the photoreceptor outer segment. It carries out the reaction 3',5'-cyclic GMP + H2O = GMP + H(+). Functionally, rod-specific cGMP phosphodiesterase that catalyzes the hydrolysis of 3',5'-cyclic GMP. This protein participates in processes of transmission and amplification of the visual signal. In Homo sapiens (Human), this protein is Rod cGMP-specific 3',5'-cyclic phosphodiesterase subunit alpha.